Consider the following 236-residue polypeptide: Small ribosomal subunit protein uS3 (236 aa).

The KH type-2 domain maps to 39–107 (VREFLKKSLS…PAQISITEIK (69 aa)).

Belongs to the universal ribosomal protein uS3 family. In terms of assembly, part of the 30S ribosomal subunit. Forms a tight complex with proteins S10 and S14.

Binds the lower part of the 30S subunit head. Binds mRNA in the 70S ribosome, positioning it for translation. This Wigglesworthia glossinidia brevipalpis protein is Small ribosomal subunit protein uS3.